The following is a 335-amino-acid chain: Glycerol-3-phosphate dehydrogenase [NAD(P)+] (335 aa).

The NADPH site is built by serine 12, tryptophan 13, and lysine 107. Sn-glycerol 3-phosphate is bound by residues lysine 107, glycine 138, and serine 140. Alanine 142 is an NADPH binding site. 5 residues coordinate sn-glycerol 3-phosphate: lysine 193, aspartate 246, serine 256, arginine 257, and asparagine 258. The active-site Proton acceptor is lysine 193. Arginine 257 lines the NADPH pocket. NADPH is bound by residues valine 281 and glutamate 283.

The protein belongs to the NAD-dependent glycerol-3-phosphate dehydrogenase family.

The protein localises to the cytoplasm. It carries out the reaction sn-glycerol 3-phosphate + NAD(+) = dihydroxyacetone phosphate + NADH + H(+). It catalyses the reaction sn-glycerol 3-phosphate + NADP(+) = dihydroxyacetone phosphate + NADPH + H(+). It functions in the pathway membrane lipid metabolism; glycerophospholipid metabolism. Its function is as follows. Catalyzes the reduction of the glycolytic intermediate dihydroxyacetone phosphate (DHAP) to sn-glycerol 3-phosphate (G3P), the key precursor for phospholipid synthesis. The chain is Glycerol-3-phosphate dehydrogenase [NAD(P)+] from Geobacter metallireducens (strain ATCC 53774 / DSM 7210 / GS-15).